The chain runs to 128 residues: Fluoride-specific ion channel FluC (128 aa).

4 consecutive transmembrane segments (helical) span residues 4-24 (LLLV…VGVQ), 37-57 (TFIV…WLAL), 72-92 (VGVM…ALMI), and 101-121 (FTYT…GLLI). Residues glycine 76 and threonine 79 each coordinate Na(+).

Belongs to the fluoride channel Fluc/FEX (TC 1.A.43) family.

It localises to the cell inner membrane. The enzyme catalyses fluoride(in) = fluoride(out). Na(+) is not transported, but it plays an essential structural role and its presence is essential for fluoride channel function. In terms of biological role, fluoride-specific ion channel. Important for reducing fluoride concentration in the cell, thus reducing its toxicity. In Caulobacter sp. (strain K31), this protein is Fluoride-specific ion channel FluC.